A 172-amino-acid polypeptide reads, in one-letter code: NADH-ubiquinone oxidoreductase chain 6 (172 aa).

5 helical membrane-spanning segments follow: residues 1–21 (MTYF…AVAS), 27–47 (YGVV…LSLG), 48–68 (VSFV…VVFV), 87–107 (VVGY…VGGF), and 138–158 (CGVG…FVVL).

Belongs to the complex I subunit 6 family.

It is found in the mitochondrion membrane. It carries out the reaction a ubiquinone + NADH + 5 H(+)(in) = a ubiquinol + NAD(+) + 4 H(+)(out). Core subunit of the mitochondrial membrane respiratory chain NADH dehydrogenase (Complex I) that is believed to belong to the minimal assembly required for catalysis. Complex I functions in the transfer of electrons from NADH to the respiratory chain. The immediate electron acceptor for the enzyme is believed to be ubiquinone. This chain is NADH-ubiquinone oxidoreductase chain 6 (MT-ND6), found in Uria lomvia (Thick-billed murre).